The following is a 374-amino-acid chain: Trichodiene synthase (374 aa).

Positions 100, 164, 225, 229, 233, 239, and 241 each coordinate Mg(2+). The aspartate-rich domain stretch occupies residues 100–104; that stretch reads DDSKD.

This sequence belongs to the trichodiene synthase family. Requires Mg(2+) as cofactor. It depends on Mn(2+) as a cofactor.

It catalyses the reaction (2E,6E)-farnesyl diphosphate = trichodiene + diphosphate. The protein operates within sesquiterpene biosynthesis; trichothecene biosynthesis. Benzyl triethylammonium cation (BTAC) acts as a competitive inhibitor of trichodiene synthase reaction in the presence of pyrophosphate (PPi). In terms of biological role, trichodiene synthase; part of the core gene cluster that mediates the biosynthesis of trichothecenes, a very large family of chemically related bicyclic sesquiterpene compounds acting as mycotoxins, including T2-toxin. The biosynthesis of trichothecenes begins with the cyclization of farnesyl diphosphate to trichodiene and is catalyzed by the trichodiene synthase TRI5. Trichodiene undergoes a series of oxygenations catalyzed by the cytochrome P450 monooxygenase TRI4. TRI4 controls the addition of four oxygens at C-2, C-3, C-11, and the C-12, C-13-epoxide to form the intermediate isotrichotriol. Isotrichotriol then undergoes a non-enzymatic isomerization and cyclization to form isotrichodermol. During this process, the oxygen at the C-2 position becomes the pyran ring oxygen and the hydroxyl group at C-11 is lost. More complex type A trichothecenes are built by modifying isotrichodermol through a series of paired hydroxylation and acetylation or acylation steps. Isotrichodermol is converted to isotrichodermin by the acetyltransferase TRI101. TRI101 encodes a C-3 transacetylase that acts as a self-protection or resistance factor during biosynthesis and that the presence of a free C-3 hydroxyl group is a key component of Fusarium trichothecene phytotoxicity. A second hydroxyl group is added to C-15 by the trichothecene C-15 hydroxylase TRI11, producing 15-decalonectrin, which is then acetylated by TRI3, producing calonectrin. A third hydroxyl group is added at C-4 by the cytochrome P450 monooxygenase TRI13, converting calonectrin to 3,15-diacetoxyspirpenol, which is subsequently acetylated by the acetyltransferase TRI7. A fourth hydroxyl group is added to C-8 by the cytochrome P450 monooxygenase TRI1, followed by the addition of an isovaleryl moiety by TRI16. Finally, the acetyl group is removed from the C-3 position by the trichothecene C-3 esterase TRI8 to produce T-2 toxin. This Fusarium sporotrichioides protein is Trichodiene synthase.